The following is a 627-amino-acid chain: Ski protein homolog (627 aa).

The segment covering 1 to 12 (MSDSPIGSSQQV) has biased composition (polar residues). Disordered stretches follow at residues 1–22 (MSDS…PDLM), 34–58 (LHEE…KDSR), and 299–318 (EYDE…METP).

It belongs to the SKI family. In terms of assembly, may interact with daf-3. As to expression, expressed in ganglia in the head and tail and in the anterior pharynx.

It is found in the nucleus. Probable component of transcriptional regulatory complex with SMAD protein daf-3. Required to regulate entry into a developmentally arrested larval state known as dauer, in response to harsh environmental conditions. Involved in larvae undergoing cell-cycle arrest during the dauer stage. This is Ski protein homolog from Caenorhabditis elegans.